A 138-amino-acid chain; its full sequence is Nucleoside diphosphate kinase (138 aa).

ATP-binding residues include lysine 9, phenylalanine 57, arginine 85, threonine 91, arginine 102, and asparagine 112. Catalysis depends on histidine 115, which acts as the Pros-phosphohistidine intermediate.

It belongs to the NDK family. Homotetramer. It depends on Mg(2+) as a cofactor.

Its subcellular location is the cytoplasm. The enzyme catalyses a 2'-deoxyribonucleoside 5'-diphosphate + ATP = a 2'-deoxyribonucleoside 5'-triphosphate + ADP. It carries out the reaction a ribonucleoside 5'-diphosphate + ATP = a ribonucleoside 5'-triphosphate + ADP. Functionally, major role in the synthesis of nucleoside triphosphates other than ATP. The ATP gamma phosphate is transferred to the NDP beta phosphate via a ping-pong mechanism, using a phosphorylated active-site intermediate. The chain is Nucleoside diphosphate kinase from Exiguobacterium sibiricum (strain DSM 17290 / CCUG 55495 / CIP 109462 / JCM 13490 / 255-15).